Reading from the N-terminus, the 190-residue chain is Selenoprotein S (190 aa).

The helical transmembrane segment at 28 to 48 (SLLATYGWYIVFCCILLYVVF) threads the bilayer. The VCP/p97-interacting motif (VIM) stretch occupies residues 78–90 (RQEALAAARLKMQ). The segment covering 115–138 (KIERWDSVQEGRSYRGDARKRQEE) has biased composition (basic and acidic residues). Residues 115–190 (KIERWDSVQE…RRGPSSGGUG (76 aa)) are disordered. Residue Ser-140 is modified to Phosphoserine. The segment covering 160-174 (RGGGYNPLSGEGGGA) has biased composition (gly residues). A non-standard amino acid (selenocysteine) is located at residue Sec-189.

Belongs to the selenoprotein S family. As to quaternary structure, interacts with DERL1 and (via VIM motif) with VCP, suggesting that it forms a membrane complex with DERL1 that serves as a receptor for VCP. Also interacts with DERL2, DERL3 and SELENOK. The SELENOK-SELENOS complex interacts with VCP. Truncated SELENOS proteins produced by failed UGA/Sec decoding are ubiquitinated by the CRL2(KLHDC2) and CRL2(KLHDC3) complexes, which recognizes the glycine (Gly) at the C-terminus of truncated SELENOS proteins. Truncated SELENOS proteins produced by failed UGA/Sec decoding are also ubiquitinated by the CRL5(KLHDC1) complex. As to expression, ubiquitously expressed. Highest expression in liver and lung, with lower levels detected in spleen, kidney, brain, lymph nodes, small intestine, stomach and heart. Very low expression detected in longissimus dorsi.

It is found in the cytoplasm. The protein localises to the endoplasmic reticulum membrane. Involved in the degradation process of misfolded endoplasmic reticulum (ER) luminal proteins. Participates in the transfer of misfolded proteins from the ER to the cytosol, where they are destroyed by the proteasome in a ubiquitin-dependent manner. Probably acts by serving as a linker between DERL1, which mediates the retrotranslocation of misfolded proteins into the cytosol, and the ATPase complex VCP, which mediates the translocation and ubiquitination. This Sus scrofa (Pig) protein is Selenoprotein S.